The chain runs to 340 residues: Glucokinase (340 aa).

17–22 (GDIGGT) contacts ATP.

This sequence belongs to the bacterial glucokinase family.

Its subcellular location is the cytoplasm. The catalysed reaction is D-glucose + ATP = D-glucose 6-phosphate + ADP + H(+). This Agrobacterium fabrum (strain C58 / ATCC 33970) (Agrobacterium tumefaciens (strain C58)) protein is Glucokinase.